An 82-amino-acid chain; its full sequence is UPF0437 protein in nifX-nifW intergenic region (82 aa).

The protein belongs to the UPF0437 family.

In Frankia alni, this protein is UPF0437 protein in nifX-nifW intergenic region.